Reading from the N-terminus, the 443-residue chain is Large ribosomal subunit protein mL50 (443 aa).

Positions 121–145 (QPTRADAPEKIRDPNYEPATSGAGL) are disordered. A compositionally biased stretch (basic and acidic residues) spans 126–135 (DAPEKIRDPN).

The protein belongs to the mitochondrion-specific ribosomal protein mL50 family. In terms of assembly, component of the mitochondrial large ribosomal subunit (mt-LSU). Mature N.crassa 74S mitochondrial ribosomes consist of a small (37S) and a large (54S) subunit. The 37S small subunit contains a 16S ribosomal RNA (16S mt-rRNA) and 32 different proteins. The 54S large subunit contains a 23S rRNA (23S mt-rRNA) and 42 different proteins.

It is found in the mitochondrion. Functionally, component of the mitochondrial ribosome (mitoribosome), a dedicated translation machinery responsible for the synthesis of mitochondrial genome-encoded proteins, including at least some of the essential transmembrane subunits of the mitochondrial respiratory chain. The mitoribosomes are attached to the mitochondrial inner membrane and translation products are cotranslationally integrated into the membrane. The sequence is that of Large ribosomal subunit protein mL50 (mrpl13) from Neurospora crassa (strain ATCC 24698 / 74-OR23-1A / CBS 708.71 / DSM 1257 / FGSC 987).